Reading from the N-terminus, the 428-residue chain is Enolase (428 aa).

Glutamine 163 lines the (2R)-2-phosphoglycerate pocket. The active-site Proton donor is glutamate 205. The Mg(2+) site is built by aspartate 242, glutamate 285, and aspartate 312. Lysine 337, arginine 366, serine 367, and lysine 388 together coordinate (2R)-2-phosphoglycerate. The Proton acceptor role is filled by lysine 337.

This sequence belongs to the enolase family. Mg(2+) is required as a cofactor.

The protein localises to the cytoplasm. It is found in the secreted. Its subcellular location is the cell surface. It catalyses the reaction (2R)-2-phosphoglycerate = phosphoenolpyruvate + H2O. The protein operates within carbohydrate degradation; glycolysis; pyruvate from D-glyceraldehyde 3-phosphate: step 4/5. Its function is as follows. Catalyzes the reversible conversion of 2-phosphoglycerate (2-PG) into phosphoenolpyruvate (PEP). It is essential for the degradation of carbohydrates via glycolysis. The chain is Enolase from Novosphingobium aromaticivorans (strain ATCC 700278 / DSM 12444 / CCUG 56034 / CIP 105152 / NBRC 16084 / F199).